A 241-amino-acid chain; its full sequence is MRPRGVVIRRDAGLFGYERALVRCGLGPVAGVDEAGRGACAGPLVVAAVVLGPDGRRRLSPRLADSKLLTEQVREGLFDEVLRAAADWSAVVIPAAEIDRTGVHVANITGMRRAVARLGHRPGYVLTDGFAVAGFGTESLAVVKGDRVAACIAAASIVAKVTRDRIMRALHTRYAEYDFAQHKGYVTAAHAAALARYGPCDEHRKSYVNVAAHAVPTREARSLRLEDRVLATSLHGVTETA.

The RNase H type-2 domain occupies 27–227; it reads GPVAGVDEAG…REARSLRLED (201 aa). The a divalent metal cation site is built by aspartate 33, glutamate 34, and aspartate 128.

The protein belongs to the RNase HII family. It depends on Mn(2+) as a cofactor. Mg(2+) is required as a cofactor.

Its subcellular location is the cytoplasm. The catalysed reaction is Endonucleolytic cleavage to 5'-phosphomonoester.. In terms of biological role, endonuclease that specifically degrades the RNA of RNA-DNA hybrids. The polypeptide is Ribonuclease HII (Frankia alni (strain DSM 45986 / CECT 9034 / ACN14a)).